A 433-amino-acid polypeptide reads, in one-letter code: GTPase Obg (433 aa).

An Obg domain is found at 1–159 (MAFRDVLDIE…RRVRLELRLI (159 aa)). In terms of domain architecture, OBG-type G spans 160–327 (ADVGLVGYPN…LRQALFDLLP (168 aa)). ATP contacts are provided by residues 166–173 (GYPNAGKS), 191–195 (FTTLS), 214–217 (DIPG), 280–283 (NKIE), and 308–310 (SAK). Positions 173 and 193 each coordinate Mg(2+). In terms of domain architecture, OCT spans 342–430 (PEEVREEPLT…IGSFRFEYYA (89 aa)).

It belongs to the TRAFAC class OBG-HflX-like GTPase superfamily. OBG GTPase family. Monomer. It depends on Mg(2+) as a cofactor.

The protein resides in the cytoplasm. Its function is as follows. An essential GTPase which binds GTP, GDP and possibly (p)ppGpp with moderate affinity, with high nucleotide exchange rates and a fairly low GTP hydrolysis rate. Plays a role in control of the cell cycle, stress response, ribosome biogenesis and in those bacteria that undergo differentiation, in morphogenesis control. The chain is GTPase Obg from Deinococcus geothermalis (strain DSM 11300 / CIP 105573 / AG-3a).